The sequence spans 200 residues: Small ribosomal subunit protein uS4 (200 aa).

Residues 20-41 (SGTGKELEKRPYAPGQHGPNQR) are disordered. Residues 92–155 (ARLDAVVYSL…LKLDIIAESV (64 aa)) enclose the S4 RNA-binding domain.

Belongs to the universal ribosomal protein uS4 family. Part of the 30S ribosomal subunit. Contacts protein S5. The interaction surface between S4 and S5 is involved in control of translational fidelity.

In terms of biological role, one of the primary rRNA binding proteins, it binds directly to 16S rRNA where it nucleates assembly of the body of the 30S subunit. With S5 and S12 plays an important role in translational accuracy. The chain is Small ribosomal subunit protein uS4 from Staphylococcus saprophyticus subsp. saprophyticus (strain ATCC 15305 / DSM 20229 / NCIMB 8711 / NCTC 7292 / S-41).